The chain runs to 174 residues: Protein GrpE (174 aa).

The tract at residues 1–35 (MAQDIKNEEVEEVQEEEVVKTAEETTPEKSELDLA) is disordered. Over residues 17–35 (EVVKTAEETTPEKSELDLA) the composition is skewed to basic and acidic residues.

The protein belongs to the GrpE family. Homodimer.

It localises to the cytoplasm. Its function is as follows. Participates actively in the response to hyperosmotic and heat shock by preventing the aggregation of stress-denatured proteins, in association with DnaK and GrpE. It is the nucleotide exchange factor for DnaK and may function as a thermosensor. Unfolded proteins bind initially to DnaJ; upon interaction with the DnaJ-bound protein, DnaK hydrolyzes its bound ATP, resulting in the formation of a stable complex. GrpE releases ADP from DnaK; ATP binding to DnaK triggers the release of the substrate protein, thus completing the reaction cycle. Several rounds of ATP-dependent interactions between DnaJ, DnaK and GrpE are required for fully efficient folding. This chain is Protein GrpE, found in Streptococcus pneumoniae serotype 4 (strain ATCC BAA-334 / TIGR4).